The sequence spans 523 residues: Sucrose 6(F)-phosphate phosphorylase (523 aa).

Sucrose 6(F)-phosphate is bound by residues aspartate 58, histidine 96, arginine 221 to aspartate 223, glutamate 264, histidine 326 to aspartate 327, and lysine 434. The active-site Nucleophile is the aspartate 223. Glutamate 264 functions as the Proton donor/acceptor in the catalytic mechanism.

It belongs to the glycosyl hydrolase 13 family. Sucrose phosphorylase subfamily. In terms of assembly, monomer.

It catalyses the reaction sucrose 6(F)-phosphate + phosphate = beta-D-fructose 6-phosphate + alpha-D-glucose 1-phosphate. Functionally, catalyzes the reversible phosphorolysis of sucrose 6(F)-phosphate into alpha-D-glucose 1-phosphate (Glc1P) and D-fructose 6-phosphate. May be involved in a new pathway for the degradation of sucrose, which could become phosphorylated on its fructose moiety during uptake via a PTS system. Shows strict specificity since it does not catalyze reactions with alternative substrates. The chain is Sucrose 6(F)-phosphate phosphorylase from Ilumatobacter coccineus (strain NBRC 103263 / KCTC 29153 / YM16-304).